Reading from the N-terminus, the 266-residue chain is GTP cyclohydrolase III (266 aa).

The protein belongs to the archaeal-type GTP cyclohydrolase family.

The catalysed reaction is GTP + 3 H2O = 2-amino-5-formylamino-6-(5-phospho-D-ribosylamino)pyrimidin-4(3H)-one + 2 phosphate + 2 H(+). Functionally, catalyzes the formation of 2-amino-5-formylamino-6-ribofuranosylamino-4(3H)-pyrimidinone ribonucleotide monophosphate and inorganic phosphate from GTP. Also has an independent pyrophosphate phosphohydrolase activity. This chain is GTP cyclohydrolase III, found in Methanococcus maripaludis (strain C5 / ATCC BAA-1333).